The sequence spans 256 residues: Pimeloyl-[acyl-carrier protein] methyl ester esterase (256 aa).

In terms of domain architecture, AB hydrolase-1 spans 15–242; it reads HLVLLHGWGL…AAHAPFISHP (228 aa). Substrate is bound by residues W22, 82 to 83, and 143 to 147; these read SL and FLALQ. The active-site Nucleophile is the S82. Catalysis depends on residues D207 and H235. H235 contacts substrate.

It belongs to the AB hydrolase superfamily. Carboxylesterase BioH family. As to quaternary structure, monomer.

The protein localises to the cytoplasm. The catalysed reaction is 6-carboxyhexanoyl-[ACP] methyl ester + H2O = 6-carboxyhexanoyl-[ACP] + methanol + H(+). It participates in cofactor biosynthesis; biotin biosynthesis. Functionally, the physiological role of BioH is to remove the methyl group introduced by BioC when the pimeloyl moiety is complete. It allows to synthesize pimeloyl-ACP via the fatty acid synthetic pathway through the hydrolysis of the ester bonds of pimeloyl-ACP esters. This is Pimeloyl-[acyl-carrier protein] methyl ester esterase from Salmonella dublin (strain CT_02021853).